Here is a 146-residue protein sequence, read N- to C-terminus: Snaclec 4 (146 aa).

Positions 1–23 are cleaved as a signal peptide; it reads MGRFISISFGLLVVFLSLSGTEA. 3 cysteine pairs are disulfide-bonded: Cys27–Cys38, Cys55–Cys144, and Cys121–Cys136. In terms of domain architecture, C-type lectin spans 34–145; that stretch reads YDQNCYKVFT…CNFIAPVVCK (112 aa).

This sequence belongs to the snaclec family. Heterodimer; disulfide-linked.

It localises to the secreted. Interferes with one step of hemostasis (modulation of platelet aggregation, or coagulation cascade, for example). The polypeptide is Snaclec 4 (Daboia siamensis (Eastern Russel's viper)).